The following is an 83-amino-acid chain: Putative membrane protein insertion efficiency factor (83 aa).

The interval 62–83 (KGGYDPVPPKSVKSAGNSKDSK) is disordered.

It belongs to the UPF0161 family.

It is found in the cell inner membrane. Functionally, could be involved in insertion of integral membrane proteins into the membrane. This is Putative membrane protein insertion efficiency factor from Chlorobaculum tepidum (strain ATCC 49652 / DSM 12025 / NBRC 103806 / TLS) (Chlorobium tepidum).